The sequence spans 284 residues: Xyloglucan endotransglucosylase/hydrolase protein 22 (284 aa).

The signal sequence occupies residues 1–21; that stretch reads MAITYLLPLFLSLIITSSVSA. The GH16 domain occupies 22-211; the sequence is NFQRDVEITW…WSKAPFTASY (190 aa). Glu-97 acts as the Nucleophile in catalysis. The active-site Proton donor is Glu-101. Residue Glu-101 participates in xyloglucan binding. An N-linked (GlcNAc...) asparagine glycan is attached at Asn-105. Xyloglucan-binding positions include 114 to 116, 124 to 126, 190 to 191, and Gly-195; these read HTN, DKE, and DW. Cys-219 and Cys-228 are joined by a disulfide. N-linked (GlcNAc...) asparagine glycosylation is present at Asn-230. A disulfide bridge connects residues Cys-267 and Cys-281. Arg-272 serves as a coordination point for xyloglucan.

Belongs to the glycosyl hydrolase 16 family. XTH group 2 subfamily. In terms of processing, contains at least one intrachain disulfide bond essential for its enzymatic activity. N-glycosylated; essential for its enzymatic activity. In terms of tissue distribution, highly expressed. Predominantly expressed in green siliques. Expressed in young expanding leaves, trichomes, lateral root primordia, vascular tissue, abscission zones and elongating hypocols. Following wind stimulation, it decreases in the leaves of wind-stimulated plants, while it strongly increases in sites around cells of the pith parenchyma, between the vascular elements, and within the epidermis.

Its subcellular location is the secreted. It localises to the cell wall. The protein localises to the extracellular space. The protein resides in the apoplast. It catalyses the reaction breaks a beta-(1-&gt;4) bond in the backbone of a xyloglucan and transfers the xyloglucanyl segment on to O-4 of the non-reducing terminal glucose residue of an acceptor, which can be a xyloglucan or an oligosaccharide of xyloglucan.. Catalyzes xyloglucan endohydrolysis (XEH) and/or endotransglycosylation (XET). Cleaves and religates xyloglucan polymers, an essential constituent of the primary cell wall, and thereby participates in cell wall construction of growing tissues. Its induction in case of mechanical stress, suggests that it may contribute in the adaptive changes in morphogenesis by being recruited to alter tissues tensil strength, or flexibility, enabling adaptation to mechanically stressful environments. The protein is Xyloglucan endotransglucosylase/hydrolase protein 22 (XTH22) of Arabidopsis thaliana (Mouse-ear cress).